Reading from the N-terminus, the 257-residue chain is 5-oxoprolinase subunit A (257 aa).

This sequence belongs to the LamB/PxpA family. As to quaternary structure, forms a complex composed of PxpA, PxpB and PxpC.

The enzyme catalyses 5-oxo-L-proline + ATP + 2 H2O = L-glutamate + ADP + phosphate + H(+). In terms of biological role, catalyzes the cleavage of 5-oxoproline to form L-glutamate coupled to the hydrolysis of ATP to ADP and inorganic phosphate. The polypeptide is 5-oxoprolinase subunit A (Fusobacterium nucleatum subsp. nucleatum (strain ATCC 25586 / DSM 15643 / BCRC 10681 / CIP 101130 / JCM 8532 / KCTC 2640 / LMG 13131 / VPI 4355)).